The following is a 303-amino-acid chain: Glycine--tRNA ligase alpha subunit (303 aa).

Belongs to the class-II aminoacyl-tRNA synthetase family. In terms of assembly, tetramer of two alpha and two beta subunits.

It localises to the cytoplasm. It catalyses the reaction tRNA(Gly) + glycine + ATP = glycyl-tRNA(Gly) + AMP + diphosphate. The sequence is that of Glycine--tRNA ligase alpha subunit from Stenotrophomonas maltophilia (strain K279a).